A 258-amino-acid polypeptide reads, in one-letter code: Acyl-[acyl-carrier-protein]--UDP-N-acetylglucosamine O-acyltransferase (258 aa).

It belongs to the transferase hexapeptide repeat family. LpxA subfamily. As to quaternary structure, homotrimer.

It localises to the cytoplasm. The enzyme catalyses a (3R)-hydroxyacyl-[ACP] + UDP-N-acetyl-alpha-D-glucosamine = a UDP-3-O-[(3R)-3-hydroxyacyl]-N-acetyl-alpha-D-glucosamine + holo-[ACP]. Its pathway is glycolipid biosynthesis; lipid IV(A) biosynthesis; lipid IV(A) from (3R)-3-hydroxytetradecanoyl-[acyl-carrier-protein] and UDP-N-acetyl-alpha-D-glucosamine: step 1/6. In terms of biological role, involved in the biosynthesis of lipid A, a phosphorylated glycolipid that anchors the lipopolysaccharide to the outer membrane of the cell. The polypeptide is Acyl-[acyl-carrier-protein]--UDP-N-acetylglucosamine O-acyltransferase (Pseudomonas entomophila (strain L48)).